The following is a 174-amino-acid chain: MDINVVNALAYEDFVKLFGNVVEKCPLISAAIWSYRPFKDLADIEARISEFIHSLPDSGKEGILRCHPDLAGRDLQSGTLTPESQEEQSQAGMTTLDSAEIVHMYRLNSEYKERFGFPFVICARLNNKADIVRQLSERLKNRRTAELECAIEEVKKICSLRLHSIVLSDIQTKL.

His67 (proton donor) is an active-site residue. Residues Pro68, 84 to 88, and 119 to 123 each bind substrate; these read SQEEQ and FVICA. The short motif at 172-174 is the Microbody targeting signal element; sequence TKL.

Belongs to the OHCU decarboxylase family. As to quaternary structure, homodimer.

The protein localises to the peroxisome. It carries out the reaction 5-hydroxy-2-oxo-4-ureido-2,5-dihydro-1H-imidazole-5-carboxylate + H(+) = (S)-allantoin + CO2. It functions in the pathway purine metabolism; urate degradation; (S)-allantoin from urate: step 3/3. Its function is as follows. Catalyzes the stereoselective decarboxylation of 2-oxo-4-hydroxy-4-carboxy-5-ureidoimidazoline (OHCU) to (S)-allantoin. In Danio rerio (Zebrafish), this protein is 2-oxo-4-hydroxy-4-carboxy-5-ureidoimidazoline decarboxylase (urad).